Consider the following 92-residue polypeptide: Small ribosomal subunit protein uS19 (92 aa).

This sequence belongs to the universal ribosomal protein uS19 family.

Functionally, protein S19 forms a complex with S13 that binds strongly to the 16S ribosomal RNA. This is Small ribosomal subunit protein uS19 from Exiguobacterium sibiricum (strain DSM 17290 / CCUG 55495 / CIP 109462 / JCM 13490 / 255-15).